A 1047-amino-acid chain; its full sequence is MDAEAEDKTLRTRSKGTEVPMDSLIQELSVAYDCSMAKKRTAEDQALGVPVNKRKSLLMKPRHYSPKADCQEDRSDRTEDDGPLETHGHSTAEEIMIKPMDESLLSTAQENSSRKEDRYSCYQELMVKSLMHLGKFEKNVSVQTVSENLNDSGIQSLKAESDEADECFLIHSDDGRDKIDDSQPPFCSSDDNESNSESAENGWDSGSNFSEETKPPRVPKYVLTDHKKDLLEVPEIKTEGDKFIPCENRCDSETERKDPQNALAEPLDGNAQPSFPDVEEEDSESLAVMTEEGSDLEKAKGNLSLLEQAIALQAERGCVFHNTYKELDRFLLEHLAGERRQTKVIDMGGRQIFNNKHSPRPEKRETKCPIPGCDGTGHVTGLYPHHRSLSGCPHKVRVPLEILAMHENVLKCPTPGCTGRGHVNSNRNTHRSLSGCPIAAAEKLAMSQDKNQLDSPQTGQCPDQAHRTSLVKQIEFNFPSQAITSPRATVSKEQEKFGKVPFDYASFDAQVFGKRPLIQTVQGRKTPPFPESKHFPNPVKFPNRLPSAGAHTQSPGRASSYSYGQCSEDTHIAAAAAILNLSTRCREATDILSNKPQSLHAKGAEIEVDENGTLDLSMKKNRILDKSAPLTSSNTSIPTPSSSPFKTSSILVNAAFYQALCDQEGWDTPINYSKTHGKTEEEKEKDPVSSLENLEEKKFPGEASIPSPKPKLHARDLKKELITCPTPGCDGSGHVTGNYASHRSVSGCPLADKTLKSLMAANSQELKCPTPGCDGSGHVTGNYASHRSLSGCPRARKGGVKMTPTKEEKEDPELKCPVIGCDGQGHISGKYTSHRTASGCPLAAKRQKENPLNGASLSWKLNKQELPHCPLPGCNGLGHVNNVFVTHRSLSGCPLNAQVIKKGKVSEELMTIKLKATGGIESDEEIRHLDEEIKELNESNLKIEADMMKLQTQITSMESNLKTIEEENKLIEQNNESLLKELAGLSQALISSLADIQLPQMGPISEQNFEAYVNTLTDMYSNLERDYSPECKALLESIKQAVKGIHV.

3 disordered regions span residues 41 to 92 (TAED…HSTA), 168 to 221 (FLIH…VPKY), and 251 to 286 (DSET…SESL). Residues 52–65 (NKRKSLLMKPRHYS) show a composition bias toward basic residues. Over residues 171–181 (HSDDGRDKIDD) the composition is skewed to basic and acidic residues. 2 CCHHC-type zinc fingers span residues 359 to 402 (PRPE…PLEI) and 403 to 446 (LAMH…KLAM). Cys368, Cys373, His386, Cys392, Cys412, Cys417, His430, and Cys436 together coordinate Zn(2+). 2 disordered regions span residues 523–563 (GRKT…SYSY) and 672–710 (YSKT…SPKP). Over residues 550 to 563 (AHTQSPGRASSYSY) the composition is skewed to polar residues. Basic and acidic residues predominate over residues 677 to 687 (GKTEEEKEKDP). 4 consecutive CCHHC-type zinc fingers follow at residues 715-758 (RDLK…LKSL), 759-802 (MAAN…GVKM), 807-850 (EEKE…QKEN), and 860-903 (KLNK…IKKG). 16 residues coordinate Zn(2+): Cys724, Cys729, His742, Cys748, Cys768, Cys773, His786, Cys792, Cys816, Cys821, His834, Cys840, Cys869, Cys874, His887, and Cys893. Positions 920-992 (IESDEEIRHL…AGLSQALISS (73 aa)) form a coiled coil.

It belongs to the MYT1 family. In terms of tissue distribution, detected at low levels in heart, liver, kidney, skeletal muscle, pancreas, testis, ovary and prostate. Detected at even lower levels in mammary epithelial cells and breast cancer cells.

Its subcellular location is the nucleus. In terms of biological role, repressor that binds to DNA sequences containing a bipartite element consisting of a direct repeat of the sequence 5'-AAAGTTT-3' separated by 2-9 nucleotides. Represses basal transcription activity from target promoters. Inhibits colony formation in cultured breast cancer cells. The sequence is that of Suppression of tumorigenicity 18 protein (ST18) from Homo sapiens (Human).